Here is a 291-residue protein sequence, read N- to C-terminus: Lipoyl synthase (291 aa).

Residues cysteine 35, cysteine 40, cysteine 46, cysteine 61, cysteine 65, cysteine 68, and serine 273 each coordinate [4Fe-4S] cluster. Positions 47 to 262 constitute a Radical SAM core domain; sequence FGKRQATFLI…KEKALAMGFE (216 aa).

This sequence belongs to the radical SAM superfamily. Lipoyl synthase family. The cofactor is [4Fe-4S] cluster.

The protein resides in the cytoplasm. It carries out the reaction [[Fe-S] cluster scaffold protein carrying a second [4Fe-4S](2+) cluster] + N(6)-octanoyl-L-lysyl-[protein] + 2 oxidized [2Fe-2S]-[ferredoxin] + 2 S-adenosyl-L-methionine + 4 H(+) = [[Fe-S] cluster scaffold protein] + N(6)-[(R)-dihydrolipoyl]-L-lysyl-[protein] + 4 Fe(3+) + 2 hydrogen sulfide + 2 5'-deoxyadenosine + 2 L-methionine + 2 reduced [2Fe-2S]-[ferredoxin]. It participates in protein modification; protein lipoylation via endogenous pathway; protein N(6)-(lipoyl)lysine from octanoyl-[acyl-carrier-protein]: step 2/2. Its function is as follows. Catalyzes the radical-mediated insertion of two sulfur atoms into the C-6 and C-8 positions of the octanoyl moiety bound to the lipoyl domains of lipoate-dependent enzymes, thereby converting the octanoylated domains into lipoylated derivatives. The chain is Lipoyl synthase from Geobacter sp. (strain M21).